Here is a 136-residue protein sequence, read N- to C-terminus: Sec-independent protein translocase protein TatB (136 aa).

Residues 1–21 (MFDIGFPELALVAVIGLLVLG) form a helical membrane-spanning segment. A disordered region spans residues 89-136 (YEDMVEKNPATPMSSKASTPQTPSSGPDPQPVESHSHSDDASKQHDRS). Residues 99–115 (TPMSSKASTPQTPSSGP) are compositionally biased toward polar residues. A compositionally biased stretch (basic and acidic residues) spans 122-136 (SHSHSDDASKQHDRS).

Belongs to the TatB family. As to quaternary structure, the Tat system comprises two distinct complexes: a TatABC complex, containing multiple copies of TatA, TatB and TatC subunits, and a separate TatA complex, containing only TatA subunits. Substrates initially bind to the TatABC complex, which probably triggers association of the separate TatA complex to form the active translocon.

The protein resides in the cell inner membrane. In terms of biological role, part of the twin-arginine translocation (Tat) system that transports large folded proteins containing a characteristic twin-arginine motif in their signal peptide across membranes. Together with TatC, TatB is part of a receptor directly interacting with Tat signal peptides. TatB may form an oligomeric binding site that transiently accommodates folded Tat precursor proteins before their translocation. The polypeptide is Sec-independent protein translocase protein TatB (Hahella chejuensis (strain KCTC 2396)).